The following is a 252-amino-acid chain: Triosephosphate isomerase (252 aa).

Residue 10–12 coordinates substrate; that stretch reads NWK. Catalysis depends on histidine 96, which acts as the Electrophile. Glutamate 168 functions as the Proton acceptor in the catalytic mechanism. Substrate-binding positions include glycine 174, serine 214, and 235–236; that span reads GG.

Belongs to the triosephosphate isomerase family. As to quaternary structure, homodimer.

Its subcellular location is the cytoplasm. The catalysed reaction is D-glyceraldehyde 3-phosphate = dihydroxyacetone phosphate. It participates in carbohydrate biosynthesis; gluconeogenesis. The protein operates within carbohydrate degradation; glycolysis; D-glyceraldehyde 3-phosphate from glycerone phosphate: step 1/1. Its function is as follows. Involved in the gluconeogenesis. Catalyzes stereospecifically the conversion of dihydroxyacetone phosphate (DHAP) to D-glyceraldehyde-3-phosphate (G3P). This Streptococcus pyogenes serotype M1 protein is Triosephosphate isomerase.